The following is a 397-amino-acid chain: ATP-dependent RNA helicase eIF4A (397 aa).

The short motif at 23–51 (YKFDDLNLKPNIVRGIFGYGYETPSAIQQ) is the Q motif element. Residues 54-224 (ILPITEGRDV…TKFMNNPVRI (171 aa)) form the Helicase ATP-binding domain. 67–74 (AQSGTGKT) contributes to the ATP binding site. The DEAD box motif lies at 172–175 (DEAD). In terms of domain architecture, Helicase C-terminal spans 235–396 (GIKQFYINVE…EMPADIGALF (162 aa)).

It belongs to the DEAD box helicase family. eIF4A subfamily. As to quaternary structure, component of the eIF4F complex, which composition varies with external and internal environmental conditions. It is composed of at least eIF4A, eIF4E and eIF4G.

It is found in the cytoplasm. It catalyses the reaction ATP + H2O = ADP + phosphate + H(+). In terms of biological role, ATP-dependent RNA helicase which is a subunit of the eIF4F complex involved in cap recognition and is required for mRNA binding to ribosome. In the current model of translation initiation, eIF4A unwinds RNA secondary structures in the 5'-UTR of mRNAs which is necessary to allow efficient binding of the small ribosomal subunit, and subsequent scanning for the initiator codon. This Candida albicans (strain SC5314 / ATCC MYA-2876) (Yeast) protein is ATP-dependent RNA helicase eIF4A (TIF1).